A 390-amino-acid polypeptide reads, in one-letter code: S-adenosylmethionine synthase 1 (390 aa).

Mg(2+) is bound at residue E9. H15 contributes to the ATP binding site. E43 contacts K(+). E56 and Q99 together coordinate L-methionine. Residues 167 to 169 (DGK), 235 to 238 (SGRF), D246, 252 to 253 (RK), A269, K273, and K277 contribute to the ATP site. Residue D246 participates in L-methionine binding. K277 provides a ligand contact to L-methionine.

It belongs to the AdoMet synthase family. As to quaternary structure, homotetramer. It depends on Mn(2+) as a cofactor. The cofactor is Mg(2+). Requires Co(2+) as cofactor. K(+) serves as cofactor.

It is found in the cytoplasm. It carries out the reaction L-methionine + ATP + H2O = S-adenosyl-L-methionine + phosphate + diphosphate. It participates in amino-acid biosynthesis; S-adenosyl-L-methionine biosynthesis; S-adenosyl-L-methionine from L-methionine: step 1/1. Catalyzes the formation of S-adenosylmethionine from methionine and ATP. The reaction comprises two steps that are both catalyzed by the same enzyme: formation of S-adenosylmethionine (AdoMet) and triphosphate, and subsequent hydrolysis of the triphosphate. This chain is S-adenosylmethionine synthase 1 (SAM1), found in Actinidia chinensis var. chinensis (Chinese soft-hair kiwi).